The chain runs to 380 residues: Alanine racemase (380 aa).

Catalysis depends on Lys41, which acts as the Proton acceptor; specific for D-alanine. Lys41 carries the post-translational modification N6-(pyridoxal phosphate)lysine. Arg141 contacts substrate. Tyr271 (proton acceptor; specific for L-alanine) is an active-site residue. Met318 is a substrate binding site.

Belongs to the alanine racemase family. The cofactor is pyridoxal 5'-phosphate.

It carries out the reaction L-alanine = D-alanine. It participates in amino-acid biosynthesis; D-alanine biosynthesis; D-alanine from L-alanine: step 1/1. Catalyzes the interconversion of L-alanine and D-alanine. May also act on other amino acids. The chain is Alanine racemase (alr) from Latilactobacillus sakei subsp. sakei (strain 23K) (Lactobacillus sakei subsp. sakei).